Consider the following 993-residue polypeptide: Desmoglein-3 (993 aa).

The first 23 residues, 1–23 (MTWLLFRTSGALAILMVLILVHG), serve as a signal peptide directing secretion. The propeptide occupies 24-48 (ELRIETKGQHGEDETAIQGRRRYKR). Cadherin domains follow at residues 48 to 156 (REWV…APVF), 157 to 266 (SQSI…FPMF), 267 to 386 (KESQ…HPAS), and 383 to 494 (HPAS…CPTV). The Extracellular portion of the chain corresponds to 49–617 (EWVKFAKPCR…GKRPSGRLGS (569 aa)). 2 N-linked (GlcNAc...) asparagine glycosylation sites follow: N109 and N179. N458 and N544 each carry an N-linked (GlcNAc...) asparagine glycan. Residues 618–638 (AAIGLLLLGLLLLLLAPLLLL) form a helical membrane-spanning segment. Residues 639–993 (TCDYGVGPIG…CTEDPCSRLI (355 aa)) lie on the Cytoplasmic side of the membrane. Residues 641 to 713 (DYGVGPIGGV…NTYAGGTVVE (73 aa)) form a required for interaction with CTNND1 and localization at cell-cell junctions region. Desmoglein repeat repeat units lie at residues 903–929 (LSAS…MVTE) and 930–960 (TYSA…ERVI).

As to quaternary structure, homodimer. Part of a complex that contains DSG3, PKP1, YAP1 and YWHAG; the complex is required for localization of DSG3 and YAP1 to the cell membrane in keratinocytes. Interacts with PKP2. Interacts with CTNND1; the interaction facilitates DSG3 localization and retention at cell-cell junctions. Interacts with CDH1; the interaction is required for CDH1 localization to developing adherens junctions. Interacts with RAC1; the interaction is required for DSG3 translocation to cell-cell junctions, organization of cortical F-actin bundles and actin anchoring at cell-cell junctions. Interacts with DSC3; the interaction may limit the interaction of DSC3 with p38MAPK family members and therefore repress p38MAPK signaling activation.

It localises to the cell membrane. It is found in the cell junction. Its subcellular location is the desmosome. The protein localises to the cytoplasm. The protein resides in the tight junction. In terms of biological role, a component of desmosome cell-cell junctions which are required for positive regulation of cellular adhesion. Required for adherens and desmosome junction assembly in response to mechanical force in keratinocytes. Required for desmosome-mediated cell-cell adhesion of cells surrounding the telogen hair club and the basal layer of the outer root sheath epithelium, consequently is essential for the anchoring of telogen hairs in the hair follicle. Required for the maintenance of the epithelial barrier via promoting desmosome-mediated intercellular attachment of suprabasal epithelium to basal cells. May play a role in the protein stability of the desmosome plaque components DSP, JUP, PKP1, PKP2 and PKP3. Required for YAP1 localization at the plasma membrane in keratinocytes in response to mechanical strain, via the formation of an interaction complex composed of DSG3, PKP1 and YWHAG. May also be involved in the positive regulation of YAP1 target gene transcription and as a result cell proliferation. Positively regulates cellular contractility and cell junction formation via organization of cortical F-actin bundles and anchoring of actin to tight junctions, in conjunction with RAC1. The cytoplasmic pool of DSG3 is required for the localization of CDH1 and CTNNB1 at developing adherens junctions, potentially via modulation of SRC activity. Inhibits keratinocyte migration via suppression of p38MAPK signaling, may therefore play a role in moderating wound healing. The sequence is that of Desmoglein-3 (DSG3) from Canis lupus familiaris (Dog).